Consider the following 800-residue polypeptide: Phenylalanine--tRNA ligase beta subunit (800 aa).

The tRNA-binding domain occupies threonine 39–leucine 154. The B5 domain occupies serine 408–serine 483. Mg(2+) contacts are provided by aspartate 461, aspartate 467, glutamate 470, and glutamate 471. The 93-residue stretch at proline 708 to arginine 800 folds into the FDX-ACB domain.

This sequence belongs to the phenylalanyl-tRNA synthetase beta subunit family. Type 1 subfamily. In terms of assembly, tetramer of two alpha and two beta subunits. Requires Mg(2+) as cofactor.

Its subcellular location is the cytoplasm. The enzyme catalyses tRNA(Phe) + L-phenylalanine + ATP = L-phenylalanyl-tRNA(Phe) + AMP + diphosphate + H(+). The protein is Phenylalanine--tRNA ligase beta subunit of Staphylococcus epidermidis (strain ATCC 12228 / FDA PCI 1200).